The sequence spans 400 residues: CCA-adding enzyme (400 aa).

Residues Gly-32 and Arg-35 each contribute to the ATP site. Residues Gly-32 and Arg-35 each coordinate CTP. Mg(2+)-binding residues include Asp-45 and Asp-47. Positions 116, 159, 162, 165, and 168 each coordinate ATP. CTP is bound by residues Arg-116, Asp-159, Arg-162, Arg-165, and Arg-168.

This sequence belongs to the tRNA nucleotidyltransferase/poly(A) polymerase family. Bacterial CCA-adding enzyme type 3 subfamily. In terms of assembly, homodimer. It depends on Mg(2+) as a cofactor.

It catalyses the reaction a tRNA precursor + 2 CTP + ATP = a tRNA with a 3' CCA end + 3 diphosphate. The enzyme catalyses a tRNA with a 3' CCA end + 2 CTP + ATP = a tRNA with a 3' CCACCA end + 3 diphosphate. Catalyzes the addition and repair of the essential 3'-terminal CCA sequence in tRNAs without using a nucleic acid template. Adds these three nucleotides in the order of C, C, and A to the tRNA nucleotide-73, using CTP and ATP as substrates and producing inorganic pyrophosphate. tRNA 3'-terminal CCA addition is required both for tRNA processing and repair. Also involved in tRNA surveillance by mediating tandem CCA addition to generate a CCACCA at the 3' terminus of unstable tRNAs. While stable tRNAs receive only 3'-terminal CCA, unstable tRNAs are marked with CCACCA and rapidly degraded. This is CCA-adding enzyme from Limosilactobacillus fermentum (strain NBRC 3956 / LMG 18251) (Lactobacillus fermentum).